Reading from the N-terminus, the 131-residue chain is Ribosome-binding factor A (131 aa).

This sequence belongs to the RbfA family. Monomer. Binds 30S ribosomal subunits, but not 50S ribosomal subunits or 70S ribosomes.

It localises to the cytoplasm. One of several proteins that assist in the late maturation steps of the functional core of the 30S ribosomal subunit. Associates with free 30S ribosomal subunits (but not with 30S subunits that are part of 70S ribosomes or polysomes). Required for efficient processing of 16S rRNA. May interact with the 5'-terminal helix region of 16S rRNA. The protein is Ribosome-binding factor A of Thermotoga petrophila (strain ATCC BAA-488 / DSM 13995 / JCM 10881 / RKU-1).